The primary structure comprises 449 residues: MSDDEDMMYDDDEYFDDDEDQDQNDSESEGVEIENQYYNSKGLIDESIPDAIKSYEKVVDLENGEKGEWGFKALKKITKLYFRIGDFDNMLESFKKFLPYTKSSASSNYIEKGINSVLDMVSSSNTIELDMIQKVFDLTLKSLLDTKNERVWFRTNLKLAKLLFEKAEYGRLAKILRDLHKSCELEDGTDDQKKGSQLVDIYALEIQMYTETKNNKKLKDLYKKALEIKSAIPHPRIMGIIRECGGKMHMAEKEWEKAHTDFFEAFKNYDEAGNSRRIQCLKYLVLACMLMLSTINPFDSTEAKPYKNDPDILAMTNLVMAYEKNDIYAFEKILKDNRKTIMDDPFIRMYIEDLLRNIRTQVLLKLLKPYTRIRISFISKELNIPSSDVESLLVSLILDNKIRGSIDQVNQQLELDTAKSSAYWKYTSIHKWANQIGQLNGGINNKLVS.

Positions 1–32 (MSDDEDMMYDDDEYFDDDEDQDQNDSESEGVE) are disordered. In terms of domain architecture, PCI spans 251–420 (AEKEWEKAHT…QQLELDTAKS (170 aa)).

This sequence belongs to the CSN2 family. In terms of assembly, component of the CSN complex. The holocomplex is comprised of 8 subunits csn1-8. In the complex, it probably interacts directly with csn1, csn3, csn5, csn6, csn7 and csn8.

It localises to the cytoplasm. The protein localises to the nucleus. Essential component of the COP9 signalosome complex (CSN), a complex involved in various cellular and developmental processes. The CSN complex is an essential regulator of the ubiquitin (Ubl) conjugation pathway by mediating the deneddylation of the cullin subunits of E3 ligase complexes, leading to modify the Ubl ligase activity. The chain is COP9 signalosome complex subunit 2 (csn2) from Dictyostelium discoideum (Social amoeba).